The following is a 451-amino-acid chain: Bifunctional protein GlmU (451 aa).

Positions 1–229 are pyrophosphorylase; sequence MQRHAIVLAA…FEEIMGVNDR (229 aa). UDP-N-acetyl-alpha-D-glucosamine-binding positions include 8–11, Lys-22, Gln-72, and 77–78; these read LAAG and GT. Asp-102 contacts Mg(2+). UDP-N-acetyl-alpha-D-glucosamine contacts are provided by Gly-139, Glu-154, and Asn-227. Mg(2+) is bound at residue Asn-227. Residues 230 to 250 form a linker region; sequence VMLSEAEKAFRKRINEQHMKN. Residues 251-451 are N-acetyltransferase; it reads GVTIIDPVTT…QTTKEGYLKK (201 aa). Arg-332 and Lys-350 together coordinate UDP-N-acetyl-alpha-D-glucosamine. The active-site Proton acceptor is His-362. UDP-N-acetyl-alpha-D-glucosamine contacts are provided by Tyr-365 and Asn-376. Residues 385-386, Ala-422, and Arg-439 contribute to the acetyl-CoA site; that span reads NY.

The protein in the N-terminal section; belongs to the N-acetylglucosamine-1-phosphate uridyltransferase family. This sequence in the C-terminal section; belongs to the transferase hexapeptide repeat family. As to quaternary structure, homotrimer. Requires Mg(2+) as cofactor.

The protein resides in the cytoplasm. It carries out the reaction alpha-D-glucosamine 1-phosphate + acetyl-CoA = N-acetyl-alpha-D-glucosamine 1-phosphate + CoA + H(+). It catalyses the reaction N-acetyl-alpha-D-glucosamine 1-phosphate + UTP + H(+) = UDP-N-acetyl-alpha-D-glucosamine + diphosphate. The protein operates within nucleotide-sugar biosynthesis; UDP-N-acetyl-alpha-D-glucosamine biosynthesis; N-acetyl-alpha-D-glucosamine 1-phosphate from alpha-D-glucosamine 6-phosphate (route II): step 2/2. It functions in the pathway nucleotide-sugar biosynthesis; UDP-N-acetyl-alpha-D-glucosamine biosynthesis; UDP-N-acetyl-alpha-D-glucosamine from N-acetyl-alpha-D-glucosamine 1-phosphate: step 1/1. It participates in bacterial outer membrane biogenesis; LPS lipid A biosynthesis. Catalyzes the last two sequential reactions in the de novo biosynthetic pathway for UDP-N-acetylglucosamine (UDP-GlcNAc). The C-terminal domain catalyzes the transfer of acetyl group from acetyl coenzyme A to glucosamine-1-phosphate (GlcN-1-P) to produce N-acetylglucosamine-1-phosphate (GlcNAc-1-P), which is converted into UDP-GlcNAc by the transfer of uridine 5-monophosphate (from uridine 5-triphosphate), a reaction catalyzed by the N-terminal domain. In Staphylococcus saprophyticus subsp. saprophyticus (strain ATCC 15305 / DSM 20229 / NCIMB 8711 / NCTC 7292 / S-41), this protein is Bifunctional protein GlmU.